A 764-amino-acid polypeptide reads, in one-letter code: 5-methyltetrahydropteroyltriglutamate--homocysteine methyltransferase (764 aa).

Residues 17-20 and lysine 117 contribute to the 5-methyltetrahydropteroyltri-L-glutamate site; that span reads RELK. L-homocysteine is bound by residues 436–438 and glutamate 489; that span reads IGS. L-methionine contacts are provided by residues 436–438 and glutamate 489; that span reads IGS. 5-methyltetrahydropteroyltri-L-glutamate-binding positions include 520–521 and tryptophan 566; that span reads RC. An L-homocysteine-binding site is contributed by aspartate 604. Position 604 (aspartate 604) interacts with L-methionine. Glutamate 610 contributes to the 5-methyltetrahydropteroyltri-L-glutamate binding site. Residues histidine 646, cysteine 648, and glutamate 670 each coordinate Zn(2+). The active-site Proton donor is the histidine 699. Residue cysteine 731 participates in Zn(2+) binding.

Belongs to the vitamin-B12 independent methionine synthase family. Zn(2+) is required as a cofactor.

The catalysed reaction is 5-methyltetrahydropteroyltri-L-glutamate + L-homocysteine = tetrahydropteroyltri-L-glutamate + L-methionine. It participates in amino-acid biosynthesis; L-methionine biosynthesis via de novo pathway; L-methionine from L-homocysteine (MetE route): step 1/1. Catalyzes the transfer of a methyl group from 5-methyltetrahydrofolate to homocysteine resulting in methionine formation. The polypeptide is 5-methyltetrahydropteroyltriglutamate--homocysteine methyltransferase (Baumannia cicadellinicola subsp. Homalodisca coagulata).